A 62-amino-acid chain; its full sequence is Beta-defensin 10 (62 aa).

The N-terminal stretch at 1 to 22 (MRLHHLLLLLLLVVLSSGSGFT) is a signal peptide. The residue at position 23 (Q23) is a Pyrrolidone carboxylic acid. Disulfide bonds link C31-C60, C38-C53, and C43-C61.

The protein belongs to the beta-defensin family. Neutrophilic granules.

It localises to the secreted. In terms of biological role, has bactericidal activity. Active against E.coli ML35 and S.aureus 502A. The chain is Beta-defensin 10 (DEFB10) from Bos taurus (Bovine).